Reading from the N-terminus, the 400-residue chain is Queuine tRNA-ribosyltransferase (400 aa).

Asp93 serves as the catalytic Proton acceptor. Substrate is bound by residues 93–97 (DSGGF), Asp147, Gln190, and Gly217. The interval 248–254 (GVGSPED) is RNA binding. Catalysis depends on Asp267, which acts as the Nucleophile. The tract at residues 272 to 276 (TRIAR) is RNA binding; important for wobble base 34 recognition. 4 residues coordinate Zn(2+): Cys305, Cys307, Cys310, and His336. A disordered region spans residues 375–400 (RRERARAAGGAGHAPGPAEPLLPENR). Residues 388 to 400 (APGPAEPLLPENR) show a composition bias toward low complexity.

Belongs to the queuine tRNA-ribosyltransferase family. In terms of assembly, homodimer. Within each dimer, one monomer is responsible for RNA recognition and catalysis, while the other monomer binds to the replacement base PreQ1. The cofactor is Zn(2+).

It catalyses the reaction 7-aminomethyl-7-carbaguanine + guanosine(34) in tRNA = 7-aminomethyl-7-carbaguanosine(34) in tRNA + guanine. Its pathway is tRNA modification; tRNA-queuosine biosynthesis. In terms of biological role, catalyzes the base-exchange of a guanine (G) residue with the queuine precursor 7-aminomethyl-7-deazaguanine (PreQ1) at position 34 (anticodon wobble position) in tRNAs with GU(N) anticodons (tRNA-Asp, -Asn, -His and -Tyr). Catalysis occurs through a double-displacement mechanism. The nucleophile active site attacks the C1' of nucleotide 34 to detach the guanine base from the RNA, forming a covalent enzyme-RNA intermediate. The proton acceptor active site deprotonates the incoming PreQ1, allowing a nucleophilic attack on the C1' of the ribose to form the product. After dissociation, two additional enzymatic reactions on the tRNA convert PreQ1 to queuine (Q), resulting in the hypermodified nucleoside queuosine (7-(((4,5-cis-dihydroxy-2-cyclopenten-1-yl)amino)methyl)-7-deazaguanosine). This chain is Queuine tRNA-ribosyltransferase, found in Symbiobacterium thermophilum (strain DSM 24528 / JCM 14929 / IAM 14863 / T).